We begin with the raw amino-acid sequence, 179 residues long: Adenine phosphoribosyltransferase (179 aa).

The protein belongs to the purine/pyrimidine phosphoribosyltransferase family. As to quaternary structure, homodimer.

The protein resides in the cytoplasm. It catalyses the reaction AMP + diphosphate = 5-phospho-alpha-D-ribose 1-diphosphate + adenine. It participates in purine metabolism; AMP biosynthesis via salvage pathway; AMP from adenine: step 1/1. Its function is as follows. Catalyzes a salvage reaction resulting in the formation of AMP, that is energically less costly than de novo synthesis. The sequence is that of Adenine phosphoribosyltransferase from Bradyrhizobium diazoefficiens (strain JCM 10833 / BCRC 13528 / IAM 13628 / NBRC 14792 / USDA 110).